A 141-amino-acid chain; its full sequence is Nucleoside diphosphate kinase (141 aa).

ATP-binding residues include K11, F59, R87, T93, R104, and N114. H117 acts as the Pros-phosphohistidine intermediate in catalysis.

The protein belongs to the NDK family. Homotetramer. The cofactor is Mg(2+).

It is found in the cytoplasm. The catalysed reaction is a 2'-deoxyribonucleoside 5'-diphosphate + ATP = a 2'-deoxyribonucleoside 5'-triphosphate + ADP. The enzyme catalyses a ribonucleoside 5'-diphosphate + ATP = a ribonucleoside 5'-triphosphate + ADP. In terms of biological role, major role in the synthesis of nucleoside triphosphates other than ATP. The ATP gamma phosphate is transferred to the NDP beta phosphate via a ping-pong mechanism, using a phosphorylated active-site intermediate. This chain is Nucleoside diphosphate kinase, found in Xanthomonas axonopodis pv. citri (strain 306).